We begin with the raw amino-acid sequence, 117 residues long: Ribonuclease P protein component (117 aa).

Belongs to the RnpA family. As to quaternary structure, consists of a catalytic RNA component (M1 or rnpB) and a protein subunit.

It catalyses the reaction Endonucleolytic cleavage of RNA, removing 5'-extranucleotides from tRNA precursor.. Functionally, RNaseP catalyzes the removal of the 5'-leader sequence from pre-tRNA to produce the mature 5'-terminus. It can also cleave other RNA substrates such as 4.5S RNA. The protein component plays an auxiliary but essential role in vivo by binding to the 5'-leader sequence and broadening the substrate specificity of the ribozyme. In Staphylococcus aureus (strain MW2), this protein is Ribonuclease P protein component.